We begin with the raw amino-acid sequence, 1297 residues long: Phosphoribosylformylglycinamidine synthase (1297 aa).

ATP is bound by residues Gly-307–Asp-318 and Ala-678. Mg(2+) contacts are provided by Glu-718, Asn-722, and Asp-886. Residues Met-1044–Gly-1297 form the Glutamine amidotransferase type-1 domain. Catalysis depends on Cys-1137, which acts as the Nucleophile. Active-site residues include His-1262 and Glu-1264.

In the N-terminal section; belongs to the FGAMS family. Monomer.

It localises to the cytoplasm. The catalysed reaction is N(2)-formyl-N(1)-(5-phospho-beta-D-ribosyl)glycinamide + L-glutamine + ATP + H2O = 2-formamido-N(1)-(5-O-phospho-beta-D-ribosyl)acetamidine + L-glutamate + ADP + phosphate + H(+). It participates in purine metabolism; IMP biosynthesis via de novo pathway; 5-amino-1-(5-phospho-D-ribosyl)imidazole from N(2)-formyl-N(1)-(5-phospho-D-ribosyl)glycinamide: step 1/2. Phosphoribosylformylglycinamidine synthase involved in the purines biosynthetic pathway. Catalyzes the ATP-dependent conversion of formylglycinamide ribonucleotide (FGAR) and glutamine to yield formylglycinamidine ribonucleotide (FGAM) and glutamate. The protein is Phosphoribosylformylglycinamidine synthase of Vibrio vulnificus (strain CMCP6).